The chain runs to 128 residues: L-ectoine synthase (128 aa).

Belongs to the ectoine synthase family.

The enzyme catalyses (2S)-4-acetamido-2-aminobutanoate = L-ectoine + H2O. Its pathway is amine and polyamine biosynthesis; ectoine biosynthesis; L-ectoine from L-aspartate 4-semialdehyde: step 3/3. Its function is as follows. Catalyzes the circularization of gamma-N-acetyl-alpha,gamma-diaminobutyric acid (ADABA) to ectoine (1,4,5,6-tetrahydro-2-methyl-4-pyrimidine carboxylic acid), which is an excellent osmoprotectant. The polypeptide is L-ectoine synthase (Oceanobacillus iheyensis (strain DSM 14371 / CIP 107618 / JCM 11309 / KCTC 3954 / HTE831)).